Reading from the N-terminus, the 190-residue chain is Crossover junction endodeoxyribonuclease RuvC (190 aa).

Catalysis depends on residues aspartate 8, glutamate 67, and aspartate 139. Residues aspartate 8, glutamate 67, and aspartate 139 each contribute to the Mg(2+) site.

This sequence belongs to the RuvC family. In terms of assembly, homodimer which binds Holliday junction (HJ) DNA. The HJ becomes 2-fold symmetrical on binding to RuvC with unstacked arms; it has a different conformation from HJ DNA in complex with RuvA. In the full resolvosome a probable DNA-RuvA(4)-RuvB(12)-RuvC(2) complex forms which resolves the HJ. Requires Mg(2+) as cofactor.

The protein localises to the cytoplasm. The catalysed reaction is Endonucleolytic cleavage at a junction such as a reciprocal single-stranded crossover between two homologous DNA duplexes (Holliday junction).. The RuvA-RuvB-RuvC complex processes Holliday junction (HJ) DNA during genetic recombination and DNA repair. Endonuclease that resolves HJ intermediates. Cleaves cruciform DNA by making single-stranded nicks across the HJ at symmetrical positions within the homologous arms, yielding a 5'-phosphate and a 3'-hydroxyl group; requires a central core of homology in the junction. The consensus cleavage sequence is 5'-(A/T)TT(C/G)-3'. Cleavage occurs on the 3'-side of the TT dinucleotide at the point of strand exchange. HJ branch migration catalyzed by RuvA-RuvB allows RuvC to scan DNA until it finds its consensus sequence, where it cleaves and resolves the cruciform DNA. The sequence is that of Crossover junction endodeoxyribonuclease RuvC from Haemophilus influenzae (strain ATCC 51907 / DSM 11121 / KW20 / Rd).